The chain runs to 271 residues: Transmembrane protein 33 homolog (271 aa).

Residues 1-32 form a disordered region; sequence MVEIVEEPDDHQSSSTGAGSSGSSSAPPPPPP. Low complexity predominate over residues 13 to 25; sequence SSSTGAGSSGSSS. 3 consecutive transmembrane segments (helical) span residues 56–76, 125–145, and 180–200; these read VLTV…VPAH, VVFL…IYAA, and ALGI…SLIF.

The protein belongs to the PER33/POM33 family.

Its subcellular location is the membrane. In Caenorhabditis elegans, this protein is Transmembrane protein 33 homolog.